Consider the following 409-residue polypeptide: uncharacterized protein (409 aa).

The region spanning 3–162 (TDVRVLRQDD…DDVRLRYAVP (160 aa)) is the N-acetyltransferase domain. Acetyl-CoA-binding positions include 82–84 (VSV), 90–95 (RRGVLT), and 118–119 (SE). The active-site Proton donor is Tyr-123. Residue Phe-409 is the Proton acceptor; via carboxylate of the active site.

This sequence belongs to the acetyltransferase Eis family. As to quaternary structure, homohexamer; trimer of dimers.

This is an uncharacterized protein from Streptomyces avermitilis (strain ATCC 31267 / DSM 46492 / JCM 5070 / NBRC 14893 / NCIMB 12804 / NRRL 8165 / MA-4680).